Reading from the N-terminus, the 329-residue chain is Glyceraldehyde-3-phosphate dehydrogenase 1 (329 aa).

NAD(+) contacts are provided by residues Arg-11–Ile-12, Asp-33, and Glu-77. A Phosphoserine modification is found at Ser-148. Ser-148–Thr-150 provides a ligand contact to D-glyceraldehyde 3-phosphate. Residue Cys-149 is the Nucleophile of the active site. Position 177 is a phosphoserine (Ser-177). Residue Thr-179 participates in D-glyceraldehyde 3-phosphate binding. Ser-200 carries the phosphoserine modification. Residues Thr-208–Gly-209 and Arg-231 contribute to the D-glyceraldehyde 3-phosphate site. Asn-313 provides a ligand contact to NAD(+).

Belongs to the glyceraldehyde-3-phosphate dehydrogenase family. Homotetramer.

The protein localises to the cytoplasm. The catalysed reaction is D-glyceraldehyde 3-phosphate + phosphate + NAD(+) = (2R)-3-phospho-glyceroyl phosphate + NADH + H(+). It participates in carbohydrate degradation; glycolysis; pyruvate from D-glyceraldehyde 3-phosphate: step 1/5. This Kluyveromyces marxianus (Yeast) protein is Glyceraldehyde-3-phosphate dehydrogenase 1.